Here is a 302-residue protein sequence, read N- to C-terminus: Probable 5-dehydro-4-deoxyglucarate dehydratase (302 aa).

This sequence belongs to the DapA family.

It catalyses the reaction 5-dehydro-4-deoxy-D-glucarate + H(+) = 2,5-dioxopentanoate + CO2 + H2O. The protein operates within carbohydrate acid metabolism; D-glucarate degradation; 2,5-dioxopentanoate from D-glucarate: step 2/2. In Rhizobium rhizogenes (strain K84 / ATCC BAA-868) (Agrobacterium radiobacter), this protein is Probable 5-dehydro-4-deoxyglucarate dehydratase.